Reading from the N-terminus, the 267-residue chain is 3-methyl-2-oxobutanoate hydroxymethyltransferase (267 aa).

Residues Asp41 and Asp80 each contribute to the Mg(2+) site. 3-methyl-2-oxobutanoate-binding positions include 41–42 (DS), Asp80, and Lys109. Glu111 provides a ligand contact to Mg(2+). The Proton acceptor role is filled by Glu178.

The protein belongs to the PanB family. In terms of assembly, homodecamer; pentamer of dimers. It depends on Mg(2+) as a cofactor.

The protein resides in the cytoplasm. The enzyme catalyses 3-methyl-2-oxobutanoate + (6R)-5,10-methylene-5,6,7,8-tetrahydrofolate + H2O = 2-dehydropantoate + (6S)-5,6,7,8-tetrahydrofolate. It functions in the pathway cofactor biosynthesis; (R)-pantothenate biosynthesis; (R)-pantoate from 3-methyl-2-oxobutanoate: step 1/2. In terms of biological role, catalyzes the reversible reaction in which hydroxymethyl group from 5,10-methylenetetrahydrofolate is transferred onto alpha-ketoisovalerate to form ketopantoate. This is 3-methyl-2-oxobutanoate hydroxymethyltransferase from Kosmotoga olearia (strain ATCC BAA-1733 / DSM 21960 / TBF 19.5.1).